We begin with the raw amino-acid sequence, 448 residues long: Protein king tubby (448 aa).

The tract at residues 103–195 is disordered; it reads HELEDEESSP…NGTGGESEGD (93 aa). Low complexity predominate over residues 118-133; sequence QHQQSASHSANSTQSQ. Ser-141 is modified (phosphoserine). The span at 182 to 191 shows a compositional bias: gly residues; it reads NGTGNGTGGE.

The protein belongs to the TUB family.

The protein localises to the cytoplasm. It is found in the nucleus. Its subcellular location is the cell projection. It localises to the cilium membrane. The protein resides in the rhabdomere. The polypeptide is Protein king tubby (Drosophila erecta (Fruit fly)).